A 188-amino-acid polypeptide reads, in one-letter code: dCTP deaminase (188 aa).

DCTP contacts are provided by residues 111-116 (KSTYAR), 135-137 (TLE), Gln156, Tyr170, and Gln180. Glu137 acts as the Proton donor/acceptor in catalysis.

The protein belongs to the dCTP deaminase family. Homotrimer.

It carries out the reaction dCTP + H2O + H(+) = dUTP + NH4(+). Its pathway is pyrimidine metabolism; dUMP biosynthesis; dUMP from dCTP (dUTP route): step 1/2. Functionally, catalyzes the deamination of dCTP to dUTP. This Pseudomonas fluorescens (strain Pf0-1) protein is dCTP deaminase.